We begin with the raw amino-acid sequence, 253 residues long: MRILVSNDDGVHAEGIRALSEALTACGEVIVVAPDRNRSGASHSLTLEVPLRVTRLGETGFNGSESYAVKGTPTDCVHLAVNELVRPEPDMVVAGINHGANLGDDVIYSGTVAAATEGRHLGFPSLAISLVGKTHFATAAHYAAQLVKGMMVHPLPADQILNVNVPDLPLDQIKGIRVTRLGNRHRAESVICSEDPRGQPIYWIGPPGSQQDAGEGTDFAAIEQGYVSITPLTIDMTAYSSLAGLGAWLDLQG.

Aspartate 8, aspartate 9, serine 39, and asparagine 97 together coordinate a divalent metal cation.

This sequence belongs to the SurE nucleotidase family. The cofactor is a divalent metal cation.

It is found in the cytoplasm. The enzyme catalyses a ribonucleoside 5'-phosphate + H2O = a ribonucleoside + phosphate. Functionally, nucleotidase that shows phosphatase activity on nucleoside 5'-monophosphates. This is 5'-nucleotidase SurE from Aeromonas hydrophila subsp. hydrophila (strain ATCC 7966 / DSM 30187 / BCRC 13018 / CCUG 14551 / JCM 1027 / KCTC 2358 / NCIMB 9240 / NCTC 8049).